Here is a 77-residue protein sequence, read N- to C-terminus: U8-lycotoxin-Ls1t (77 aa).

The N-terminal stretch at 1–20 is a signal peptide; the sequence is MKLIIFTGLVLFAIVSLIEA. The propeptide occupies 21–26; the sequence is QAENEK.

Belongs to the neurotoxin 19 (CSTX) family. 08 (U8-Lctx) subfamily. In terms of processing, contains 4 disulfide bonds. As to expression, expressed by the venom gland.

It localises to the secreted. In Lycosa singoriensis (Wolf spider), this protein is U8-lycotoxin-Ls1t.